The chain runs to 183 residues: 2-hydroxy-1,4-benzoquinone reductase (183 aa).

Residues 11-18 (SLRRDSFN), 77-80 (EYNR), and serine 113 contribute to the FMN site.

The protein belongs to the SsuE family. Homotetramer. The cofactor is FMN.

It carries out the reaction 2-hydroxy-1,4-benzoquinone + NADH + 2 H(+) = benzene-1,2,4-triol + NAD(+). Functionally, involved in the metabolism of 4-aminophenol. Catalyzes the reduction of the auto-oxidation product 2-hydroxy-1,4-benzoquinone back to hydroxyquinol. Has a broad substrate specificity toward benzoquinones, converting them to the corresponding 1,4-benzenediols. The chain is 2-hydroxy-1,4-benzoquinone reductase from Burkholderia sp.